A 257-amino-acid chain; its full sequence is Mediator of RNA polymerase II transcription subunit 7 (257 aa).

The interval 33–74 (EWQRQQNDEEIETKQEEADDKDEKDNEKQNETQDTVPPGELR) is disordered. The segment covering 44–63 (ETKQEEADDKDEKDNEKQNE) has biased composition (basic and acidic residues).

The protein belongs to the Mediator complex subunit 7 family. Component of the Mediator complex.

The protein resides in the nucleus. Its function is as follows. Component of the Mediator complex, a coactivator involved in the regulated transcription of nearly all RNA polymerase II-dependent genes. Mediator functions as a bridge to convey information from gene-specific regulatory proteins to the basal RNA polymerase II transcription machinery. Mediator is recruited to promoters by direct interactions with regulatory proteins and serves as a scaffold for the assembly of a functional preinitiation complex with RNA polymerase II and the general transcription factors. The chain is Mediator of RNA polymerase II transcription subunit 7 (MED7) from Scheffersomyces stipitis (strain ATCC 58785 / CBS 6054 / NBRC 10063 / NRRL Y-11545) (Yeast).